The following is a 521-amino-acid chain: AAA ATPase forming ring-shaped complexes (521 aa).

Residues 4–44 are a coiled coil; sequence TEDLAALNDRLMAKNHALAEALSRAGKELTKAKSQLAQLAQ. 235–240 is an ATP binding site; sequence GNGKTM.

Belongs to the AAA ATPase family. As to quaternary structure, homohexamer. Assembles into a hexameric ring structure.

In Bifidobacterium longum (strain NCC 2705), this protein is AAA ATPase forming ring-shaped complexes.